Here is a 145-residue protein sequence, read N- to C-terminus: Large ribosomal subunit protein bL9 (145 aa).

This sequence belongs to the bacterial ribosomal protein bL9 family.

Functionally, binds to the 23S rRNA. In Ureaplasma parvum serovar 3 (strain ATCC 700970), this protein is Large ribosomal subunit protein bL9.